The primary structure comprises 264 residues: Thiazole synthase (264 aa).

The active-site Schiff-base intermediate with DXP is the Lys-106. Residues Gly-167, 193 to 194 (AG), and 215 to 216 (NS) each bind 1-deoxy-D-xylulose 5-phosphate.

This sequence belongs to the ThiG family. In terms of assembly, homotetramer. Forms heterodimers with either ThiH or ThiS.

It is found in the cytoplasm. It catalyses the reaction [ThiS sulfur-carrier protein]-C-terminal-Gly-aminoethanethioate + 2-iminoacetate + 1-deoxy-D-xylulose 5-phosphate = [ThiS sulfur-carrier protein]-C-terminal Gly-Gly + 2-[(2R,5Z)-2-carboxy-4-methylthiazol-5(2H)-ylidene]ethyl phosphate + 2 H2O + H(+). It functions in the pathway cofactor biosynthesis; thiamine diphosphate biosynthesis. Catalyzes the rearrangement of 1-deoxy-D-xylulose 5-phosphate (DXP) to produce the thiazole phosphate moiety of thiamine. Sulfur is provided by the thiocarboxylate moiety of the carrier protein ThiS. In vitro, sulfur can be provided by H(2)S. The protein is Thiazole synthase of Prochlorococcus marinus (strain AS9601).